Here is a 420-residue protein sequence, read N- to C-terminus: Acetyl-CoA acetyltransferase B, mitochondrial (420 aa).

A mitochondrion-targeting transit peptide spans 1-33 (MAFCGPRTAARLSHSTRALHYTHRSFASPRTLN). The active-site Acyl-thioester intermediate is cysteine 119. CoA is bound by residues tyrosine 212, 251-253 (RVD), and lysine 256. A K(+)-binding site is contributed by tyrosine 212. The K(+) site is built by alanine 273 and alanine 274. Serine 277 contributes to the CoA binding site. Residue valine 374 coordinates K(+). Cysteine 406 functions as the Proton donor/acceptor in the catalytic mechanism.

Belongs to the thiolase-like superfamily. Thiolase family. In terms of assembly, homotetramer.

The protein localises to the mitochondrion. The enzyme catalyses 2 acetyl-CoA = acetoacetyl-CoA + CoA. It carries out the reaction propanoyl-CoA + acetyl-CoA = 2-methyl-3-oxobutanoyl-CoA + CoA. It participates in lipid metabolism; fatty acid beta-oxidation. Its function is as follows. This is one of the enzymes that catalyzes the last step of the mitochondrial beta-oxidation pathway, an aerobic process breaking down fatty acids into acetyl-CoA. Using free coenzyme A/CoA, catalyzes the thiolytic cleavage of medium- to long-chain 3-oxoacyl-CoAs into acetyl-CoA and a fatty acyl-CoA shortened by two carbon atoms. The activity of the enzyme is reversible and it can also catalyze the condensation of two acetyl-CoA molecules into acetoacetyl-CoA. Thereby, it plays a major role in ketone body metabolism. This Xenopus laevis (African clawed frog) protein is Acetyl-CoA acetyltransferase B, mitochondrial (acat1-b).